A 77-amino-acid chain; its full sequence is Metallothionein-like protein type 2 (77 aa).

The protein belongs to the metallothionein superfamily. Type 15 family. As to expression, expressed in the left, stem and flower, at very low levels in roots and is not detectable in mesophyll protoplasts.

Functionally, metallothioneins have a high content of cysteine residues that bind various heavy metals. In Vicia faba (Broad bean), this protein is Metallothionein-like protein type 2 (MTI).